We begin with the raw amino-acid sequence, 197 residues long: Small ribosomal subunit protein uS4 (197 aa).

The S4 RNA-binding domain maps to 87–147 (LRLDNVLFRL…EKSKSSARYK (61 aa)).

It belongs to the universal ribosomal protein uS4 family. Part of the 30S ribosomal subunit. Contacts protein S5. The interaction surface between S4 and S5 is involved in control of translational fidelity.

In terms of biological role, one of the primary rRNA binding proteins, it binds directly to 16S rRNA where it nucleates assembly of the body of the 30S subunit. With S5 and S12 plays an important role in translational accuracy. The protein is Small ribosomal subunit protein uS4 of Lachnospira eligens (strain ATCC 27750 / DSM 3376 / VPI C15-48 / C15-B4) (Eubacterium eligens).